We begin with the raw amino-acid sequence, 187 residues long: Mitochondrial import receptor subunit TOM20-4 (187 aa).

M1 is subject to N-acetylmethionine. Residues 1–160 (MDMQNENERL…QKKTSEFKYD (160 aa)) lie on the Cytoplasmic side of the membrane. Residues 84 to 117 (LSFGFLSSDQTEASDNFEKASQFFQLAVEEQPES) form a TPR repeat. Residues 161-178 (VFGWVILASYVVAWISFA) form a helical membrane-spanning segment. The Mitochondrial intermembrane portion of the chain corresponds to 179 to 187 (NSQTPVSRQ). The AKR2A-binding sequence (ABS) required for mitochondrion outer membrane targeting signature appears at 179-187 (NSQTPVSRQ).

Belongs to the Tom20 family. Forms part of the preprotein translocase complex of the outer mitochondrial membrane (TOM complex) which consists of at least 6 different proteins (TOM5, TOM6, TOM7, TOM20, TOM22/TOM9 and TOM40). Interacts with a variety of mitochondrial precursor proteins. Interacts with AKR2A. Component of a mitochondrial large protein complex that contains, at least, MIC60, DGS1, TOM40, TOM20 proteins, and petC/RISP. The N-terminus is blocked. In terms of tissue distribution, expressed in roots, flowers, young cotyledons and leaves.

The protein resides in the mitochondrion outer membrane. Functionally, central component of the receptor complex responsible for the recognition and translocation of cytosolically synthesized mitochondrial preproteins. Together with TOM22 functions as the transit peptide receptor at the surface of the mitochondrion outer membrane and facilitates the movement of preproteins into the translocation pore. This chain is Mitochondrial import receptor subunit TOM20-4, found in Arabidopsis thaliana (Mouse-ear cress).